A 521-amino-acid chain; its full sequence is Formate--tetrahydrofolate ligase (521 aa).

This sequence belongs to the formate--tetrahydrofolate ligase family.

It catalyses the reaction (6S)-5,6,7,8-tetrahydrofolate + formate + ATP = (6R)-10-formyltetrahydrofolate + ADP + phosphate. It participates in one-carbon metabolism; tetrahydrofolate interconversion. The chain is Formate--tetrahydrofolate ligase from Ureaplasma parvum serovar 3 (strain ATCC 700970).